We begin with the raw amino-acid sequence, 101 residues long: Small ribosomal subunit protein uS10 (101 aa).

This sequence belongs to the universal ribosomal protein uS10 family. Part of the 30S ribosomal subunit.

Its function is as follows. Involved in the binding of tRNA to the ribosomes. The polypeptide is Small ribosomal subunit protein uS10 (Flavobacterium johnsoniae (strain ATCC 17061 / DSM 2064 / JCM 8514 / BCRC 14874 / CCUG 350202 / NBRC 14942 / NCIMB 11054 / UW101) (Cytophaga johnsonae)).